A 170-amino-acid chain; its full sequence is Co-chaperone protein HscB homolog (170 aa).

The 75-residue stretch at 5–79 folds into the J domain; that stretch reads DHFSLFGLPT…RARYLCEQAG (75 aa).

Belongs to the HscB family. In terms of assembly, interacts with HscA and stimulates its ATPase activity.

Its function is as follows. Co-chaperone involved in the maturation of iron-sulfur cluster-containing proteins. Seems to help targeting proteins to be folded toward HscA. The protein is Co-chaperone protein HscB homolog of Bordetella bronchiseptica (strain ATCC BAA-588 / NCTC 13252 / RB50) (Alcaligenes bronchisepticus).